Reading from the N-terminus, the 446-residue chain is T-box transcription factor TBX19 (446 aa).

Residues 43–216 (LEDAPLWQRF…YNPFAKAFLD (174 aa)) constitute a DNA-binding region (T-box).

Its subcellular location is the nucleus. Transcriptional regulator involved in developmental processes. Can activate POMC gene expression and repress the alpha glycoprotein subunit and thyroid-stimulating hormone beta promoters. The polypeptide is T-box transcription factor TBX19 (Mus musculus (Mouse)).